A 316-amino-acid polypeptide reads, in one-letter code: Methionyl-tRNA formyltransferase (316 aa).

110 to 113 (SLLP) contacts (6S)-5,6,7,8-tetrahydrofolate.

The protein belongs to the Fmt family.

The catalysed reaction is L-methionyl-tRNA(fMet) + (6R)-10-formyltetrahydrofolate = N-formyl-L-methionyl-tRNA(fMet) + (6S)-5,6,7,8-tetrahydrofolate + H(+). Attaches a formyl group to the free amino group of methionyl-tRNA(fMet). The formyl group appears to play a dual role in the initiator identity of N-formylmethionyl-tRNA by promoting its recognition by IF2 and preventing the misappropriation of this tRNA by the elongation apparatus. The sequence is that of Methionyl-tRNA formyltransferase from Halothermothrix orenii (strain H 168 / OCM 544 / DSM 9562).